A 270-amino-acid polypeptide reads, in one-letter code: MDNKIVYVVSDSVGETADLVVRAAMGQFPFAPDIRRVPYVEDTGTLKEVISIAKSNQALICFTLVKPDMRQYLVTEAAKEGVEAYDIIGPLIDQIEEITGQVPRYEPGVVRRLDEEYFKKIEAIEFAVKYDDGRDARGILKADIVLIGVSRTSKTPLSQYLAHNKRLKVANVPLVPEVDPPEELYQVAKEKCFGLKITPDKLNHIRKERLKSLGLSDGATYANINRIQEEIDHFEEVISKINCQVIDVSNKAIEETANIIVNAVQNQKMF.

Residue 148-155 coordinates ADP; sequence GVSRTSKT.

The protein belongs to the pyruvate, phosphate/water dikinase regulatory protein family. PDRP subfamily.

It carries out the reaction N(tele)-phospho-L-histidyl/L-threonyl-[pyruvate, phosphate dikinase] + ADP = N(tele)-phospho-L-histidyl/O-phospho-L-threonyl-[pyruvate, phosphate dikinase] + AMP + H(+). It catalyses the reaction N(tele)-phospho-L-histidyl/O-phospho-L-threonyl-[pyruvate, phosphate dikinase] + phosphate + H(+) = N(tele)-phospho-L-histidyl/L-threonyl-[pyruvate, phosphate dikinase] + diphosphate. Bifunctional serine/threonine kinase and phosphorylase involved in the regulation of the pyruvate, phosphate dikinase (PPDK) by catalyzing its phosphorylation/dephosphorylation. In Bacillus cereus (strain B4264), this protein is Putative pyruvate, phosphate dikinase regulatory protein.